A 175-amino-acid chain; its full sequence is Shikimate kinase (175 aa).

11-16 provides a ligand contact to ATP; that stretch reads GAGKTT. Residue threonine 15 participates in Mg(2+) binding. Positions 33, 57, and 79 each coordinate substrate. Arginine 118 is a binding site for ATP. Arginine 140 provides a ligand contact to substrate.

The protein belongs to the shikimate kinase family. In terms of assembly, monomer. It depends on Mg(2+) as a cofactor.

Its subcellular location is the cytoplasm. It carries out the reaction shikimate + ATP = 3-phosphoshikimate + ADP + H(+). It participates in metabolic intermediate biosynthesis; chorismate biosynthesis; chorismate from D-erythrose 4-phosphate and phosphoenolpyruvate: step 5/7. Its function is as follows. Catalyzes the specific phosphorylation of the 3-hydroxyl group of shikimic acid using ATP as a cosubstrate. This is Shikimate kinase from Phocaeicola vulgatus (strain ATCC 8482 / DSM 1447 / JCM 5826 / CCUG 4940 / NBRC 14291 / NCTC 11154) (Bacteroides vulgatus).